The chain runs to 584 residues: 2-succinyl-5-enolpyruvyl-6-hydroxy-3-cyclohexene-1-carboxylate synthase (584 aa).

Residues 563–584 (TDAEASHRERERLADRVTGLSV) are disordered. Residues 566-577 (EASHRERERLAD) are compositionally biased toward basic and acidic residues.

This sequence belongs to the TPP enzyme family. MenD subfamily. Homodimer. It depends on Mg(2+) as a cofactor. Requires Mn(2+) as cofactor. Thiamine diphosphate is required as a cofactor.

The catalysed reaction is isochorismate + 2-oxoglutarate + H(+) = 5-enolpyruvoyl-6-hydroxy-2-succinyl-cyclohex-3-ene-1-carboxylate + CO2. Its pathway is quinol/quinone metabolism; 1,4-dihydroxy-2-naphthoate biosynthesis; 1,4-dihydroxy-2-naphthoate from chorismate: step 2/7. It functions in the pathway quinol/quinone metabolism; menaquinone biosynthesis. In terms of biological role, catalyzes the thiamine diphosphate-dependent decarboxylation of 2-oxoglutarate and the subsequent addition of the resulting succinic semialdehyde-thiamine pyrophosphate anion to isochorismate to yield 2-succinyl-5-enolpyruvyl-6-hydroxy-3-cyclohexene-1-carboxylate (SEPHCHC). The chain is 2-succinyl-5-enolpyruvyl-6-hydroxy-3-cyclohexene-1-carboxylate synthase from Halobacterium salinarum (strain ATCC 29341 / DSM 671 / R1).